The following is a 532-amino-acid chain: Probable cytochrome c oxidase subunit 1 (532 aa).

The next 8 membrane-spanning stretches (helical) occupy residues 33 to 53, 74 to 94, 95 to 115, 118 to 138, 163 to 183, 200 to 220, 252 to 272, and 284 to 304; these read IMYI…SLLF, VLIT…ALFG, GFGN…FPRL, ISFW…FVDG, MAIF…INLI, PLFV…MPVL, LFWF…FGIV, and IFGY…GFIV. Residue His79 coordinates Fe(II)-heme a. Residues His258 and Tyr262 each coordinate Cu cation. The Cu cation site is built by His307 and His308. The next 2 helical transmembrane spans lie at 318–338 and 355–375; these read ALIY…IKIF and MLFS…GIIL. Residue His393 participates in heme a3 binding. Helical transmembrane passes span 394–414, 431–451, and 473–493; these read FHYT…YYWF, FWIT…LGLA, and IGAG…FYTL. His395 lines the Fe(II)-heme a pocket.

The protein belongs to the heme-copper respiratory oxidase family.

Its subcellular location is the cell membrane. The enzyme catalyses 4 Fe(II)-[cytochrome c] + O2 + 8 H(+)(in) = 4 Fe(III)-[cytochrome c] + 2 H2O + 4 H(+)(out). It participates in energy metabolism; oxidative phosphorylation. Its function is as follows. Cytochrome c oxidase is the component of the respiratory chain that catalyzes the reduction of oxygen to water. Subunits 1-3 form the functional core of the enzyme complex. CO I is the catalytic subunit of the enzyme. Electrons originating in cytochrome c are transferred via the copper A center of subunit 2 and heme A of subunit 1 to the bimetallic center formed by heme A3 and copper B. This is Probable cytochrome c oxidase subunit 1 (ctaD) from Rickettsia felis (strain ATCC VR-1525 / URRWXCal2) (Rickettsia azadi).